Reading from the N-terminus, the 600-residue chain is Aspartate--tRNA(Asp/Asn) ligase (600 aa).

Glutamate 174 contributes to the L-aspartate binding site. The segment at 198–201 (QLFK) is aspartate. Residue arginine 220 participates in L-aspartate binding. ATP-binding positions include 220–222 (RDE) and glutamine 229. L-aspartate is bound at residue histidine 457. Glutamate 491 is a binding site for ATP. Arginine 498 lines the L-aspartate pocket. Residue 543 to 546 (GLDR) participates in ATP binding.

Belongs to the class-II aminoacyl-tRNA synthetase family. Type 1 subfamily. In terms of assembly, homodimer.

The protein localises to the cytoplasm. It catalyses the reaction tRNA(Asx) + L-aspartate + ATP = L-aspartyl-tRNA(Asx) + AMP + diphosphate. Functionally, aspartyl-tRNA synthetase with relaxed tRNA specificity since it is able to aspartylate not only its cognate tRNA(Asp) but also tRNA(Asn). Reaction proceeds in two steps: L-aspartate is first activated by ATP to form Asp-AMP and then transferred to the acceptor end of tRNA(Asp/Asn). The polypeptide is Aspartate--tRNA(Asp/Asn) ligase (Burkholderia lata (strain ATCC 17760 / DSM 23089 / LMG 22485 / NCIMB 9086 / R18194 / 383)).